A 692-amino-acid chain; its full sequence is Zinc finger protein 180 (692 aa).

Positions 72–145 (VNFKIVTVDF…GVKIERFTRD (74 aa)) constitute a KRAB domain. Residues Lys138, Lys159, Lys168, Lys191, Lys198, Lys226, Lys304, Lys313, and Lys330 each participate in a glycyl lysine isopeptide (Lys-Gly) (interchain with G-Cter in SUMO2) cross-link. 12 consecutive C2H2-type zinc fingers follow at residues 353 to 375 (FECNQCGKSFSWSSHLVAHQRTH), 381 to 403 (YECSECGKSFSRSSHLVSHQRTH), 409 to 431 (YRCNQCGKSFSQSYVLVVHQRTH), 437 to 459 (YECNQCGKSFRQSYKLIAHQRTH), 465 to 487 (YECNQCGKSFIQSYKLIAHQRIH), 493 to 515 (YECNQCGKSFSQSYKLVAHQRTH), 521 to 543 (FECNQCGKSFSWSSQLVAHQRTH), 549 to 571 (YECSECGKSFNRSSHLVMHQRIH), 577 to 599 (YECNQCGKSFSQSYVLVVHQRTH), 605 to 627 (YECSQCGKSFRQSSCLTQHQRTH), 633 to 655 (FECNQCGKTFSLSARLIVHQRTH), and 661 to 683 (FTCIQCGKAFINSYKLIRHQATH).

Belongs to the krueppel C2H2-type zinc-finger protein family.

The protein localises to the nucleus. Functionally, may be involved in transcriptional regulation. The polypeptide is Zinc finger protein 180 (ZNF180) (Homo sapiens (Human)).